The sequence spans 255 residues: 5-oxoprolinase subunit A (255 aa).

It belongs to the LamB/PxpA family. In terms of assembly, forms a complex composed of PxpA, PxpB and PxpC.

It catalyses the reaction 5-oxo-L-proline + ATP + 2 H2O = L-glutamate + ADP + phosphate + H(+). Its function is as follows. Catalyzes the cleavage of 5-oxoproline to form L-glutamate coupled to the hydrolysis of ATP to ADP and inorganic phosphate. This Campylobacter jejuni subsp. jejuni serotype O:2 (strain ATCC 700819 / NCTC 11168) protein is 5-oxoprolinase subunit A.